Here is an 810-residue protein sequence, read N- to C-terminus: Venom phosphodiesterase 2 (810 aa).

The N-terminal stretch at 1–23 is a signal peptide; the sequence is MIQQKVLFISLVAVTLGLGLGLG. One can recognise an SMB domain in the interval 33 to 77; it reads QSWSCSKLRCGEKRIANVLCSCSDDCLEKKDCCTDYKSICKGETS. 9 disulfide bridges follow: cysteine 37–cysteine 42, cysteine 37–cysteine 54, cysteine 42–cysteine 72, cysteine 52–cysteine 54, cysteine 52–cysteine 65, cysteine 58–cysteine 64, cysteine 65–cysteine 72, cysteine 83–cysteine 129, and cysteine 91–cysteine 303. A divalent metal cation contacts are provided by aspartate 106 and threonine 144. Threonine 144 (AMP-threonine intermediate) is an active-site residue. 3 N-linked (GlcNAc...) asparagine glycosylation sites follow: asparagine 175, asparagine 218, and asparagine 229. Lysine 230 provides a ligand contact to AMP. A divalent metal cation is bound by residues aspartate 264, histidine 268, aspartate 311, and histidine 312. An AMP-binding site is contributed by histidine 268. 6 disulfide bridges follow: cysteine 319–cysteine 416, cysteine 367–cysteine 752, cysteine 500–cysteine 558, cysteine 513–cysteine 613, cysteine 515–cysteine 598, and cysteine 721–cysteine 731. The N-linked (GlcNAc...) asparagine glycan is linked to asparagine 364. Position 421 (histidine 421) interacts with a divalent metal cation. N-linked (GlcNAc...) asparagine glycosylation is found at asparagine 471, asparagine 553, asparagine 633, and asparagine 704.

This sequence belongs to the nucleotide pyrophosphatase/phosphodiesterase family. In terms of assembly, monomer cleaved in two subunits; disulfide-linked. Is synthesized as a single-chain protein and is subsequently cleaved to form a two-subunit protein held together with disulfide bonds. A divalent metal cation is required as a cofactor. Expressed by venom gland.

Its subcellular location is the secreted. The enzyme catalyses ADP + H2O = AMP + phosphate + H(+). Functionally, hydrolyzes ADP with high activity. Shows weak or no activity on 5'-AMP, 5'-GMP, 3'-AMP, ATP, cAMP, and cGMP. Is devoid of monophosphatase and proteinase activities. Dose-dependently inhibits platelet aggregation induced by ADP (IC(50)=0.99 uM) and collagen (IC(50)=1.4 uM). This chain is Venom phosphodiesterase 2, found in Crotalus adamanteus (Eastern diamondback rattlesnake).